The following is a 287-amino-acid chain: MSFRLRIDDSVTADHVVCWGVTVALLKKSLFGSTPEERKRRVEEKISQAVVELGLEGLSDEFRVSMLSAWVRYYVFRVDAGEKTFVLNVLSPNSPVKSFRDILDPLRGLFEKFRENIAVPVAYTDEFMLQEWINGLPLSELRDGDVMRSDEKSRRIIEESIYLTARLLYRLWKEGFVYSPWEDYEAMYCDGKIVLLDVTRFEKKPSNESFLQHYYGAPFCPPDVLKDPKSPVNRLYFRGTSERDYFGVEREKYEELFLKGIRDECGSEQEFKILLGDCEAVERIKRV.

This is an uncharacterized protein from Archaeoglobus fulgidus (strain ATCC 49558 / DSM 4304 / JCM 9628 / NBRC 100126 / VC-16).